The chain runs to 254 residues: Thiazole synthase (254 aa).

Lys-96 functions as the Schiff-base intermediate with DXP in the catalytic mechanism. Residues Gly-157, 183–184 (AG), and 205–206 (NT) contribute to the 1-deoxy-D-xylulose 5-phosphate site.

This sequence belongs to the ThiG family. Homotetramer. Forms heterodimers with either ThiH or ThiS.

It localises to the cytoplasm. The enzyme catalyses [ThiS sulfur-carrier protein]-C-terminal-Gly-aminoethanethioate + 2-iminoacetate + 1-deoxy-D-xylulose 5-phosphate = [ThiS sulfur-carrier protein]-C-terminal Gly-Gly + 2-[(2R,5Z)-2-carboxy-4-methylthiazol-5(2H)-ylidene]ethyl phosphate + 2 H2O + H(+). The protein operates within cofactor biosynthesis; thiamine diphosphate biosynthesis. Functionally, catalyzes the rearrangement of 1-deoxy-D-xylulose 5-phosphate (DXP) to produce the thiazole phosphate moiety of thiamine. Sulfur is provided by the thiocarboxylate moiety of the carrier protein ThiS. In vitro, sulfur can be provided by H(2)S. This is Thiazole synthase from Bacillus velezensis (strain DSM 23117 / BGSC 10A6 / LMG 26770 / FZB42) (Bacillus amyloliquefaciens subsp. plantarum).